We begin with the raw amino-acid sequence, 65 residues long: Conopeptide Vt3.2 (65 aa).

A signal peptide spans 1 to 12 (LLFPLATLQLNA). Positions 13–48 (DQPVERNAENIQDLNPDKRFIFMPVPRRRGPYGSVH) are excised as a propeptide. Ser-64 is subject to Serine amide.

The protein belongs to the conotoxin M superfamily. Homodimer; disulfide-linked. Expressed by the venom duct.

The protein resides in the secreted. This Conus planorbis (Planorbis cone) protein is Conopeptide Vt3.2.